Reading from the N-terminus, the 616-residue chain is Chaperone protein HscA (616 aa).

This sequence belongs to the heat shock protein 70 family.

In terms of biological role, chaperone involved in the maturation of iron-sulfur cluster-containing proteins. Has a low intrinsic ATPase activity which is markedly stimulated by HscB. Involved in the maturation of IscU. This is Chaperone protein HscA from Salmonella enteritidis PT4 (strain P125109).